Consider the following 244-residue polypeptide: Venom nerve growth factor 2 (244 aa).

The N-terminal stretch at 1-18 is a signal peptide; the sequence is MSMLCYTLIIAFLIGTWA. Positions 19–125 are excised as a propeptide; it reads APKSEDNVPL…TLNRNIRAKR (107 aa). Residues 47-66 show a composition bias toward basic and acidic residues; it reads GLKTSRNTDQRHPAPKKAED. The interval 47-67 is disordered; that stretch reads GLKTSRNTDQRHPAPKKAEDQ. 3 disulfides stabilise this stretch: Cys139–Cys205, Cys181–Cys233, and Cys193–Cys235.

Belongs to the NGF-beta family. In terms of assembly, homodimer; non-covalently linked. As to expression, expressed by the venom gland.

It localises to the secreted. Functionally, nerve growth factor is important for the development and maintenance of the sympathetic and sensory nervous systems. It stimulates division and differentiation of sympathetic and embryonic sensory neurons as well as basal forebrain cholinergic neurons in the brain. Its relevance in the snake venom is not clear. However, it has been shown to inhibit metalloproteinase-dependent proteolysis of platelet glycoprotein Ib alpha, suggesting a metalloproteinase inhibition to prevent metalloprotease autodigestion and/or protection against prey proteases. Binds a lipid between the two protein chains in the homodimer. The lipid-bound form promotes histamine relase from mouse mast cells, contrary to the lipid-free form. The polypeptide is Venom nerve growth factor 2 (Tropidechis carinatus (Australian rough-scaled snake)).